The sequence spans 510 residues: Maturase K (510 aa).

The protein belongs to the intron maturase 2 family. MatK subfamily.

The protein resides in the plastid. Its subcellular location is the chloroplast. In terms of biological role, usually encoded in the trnK tRNA gene intron. Probably assists in splicing its own and other chloroplast group II introns. The polypeptide is Maturase K (Populus nigra (Lombardy poplar)).